Here is a 373-residue protein sequence, read N- to C-terminus: Dual-specificity RNA methyltransferase RlmN (373 aa).

Glu94 acts as the Proton acceptor in catalysis. A Radical SAM core domain is found at 100 to 339 (EDDRATLCVS…VIVRKTRGDD (240 aa)). Cys107 and Cys344 are joined by a disulfide. Residues Cys114, Cys118, and Cys121 each coordinate [4Fe-4S] cluster. S-adenosyl-L-methionine is bound by residues 168-169 (GE), Ser200, 222-224 (SIH), and Asn301. Cys344 serves as the catalytic S-methylcysteine intermediate.

It belongs to the radical SAM superfamily. RlmN family. [4Fe-4S] cluster serves as cofactor.

Its subcellular location is the cytoplasm. The catalysed reaction is adenosine(2503) in 23S rRNA + 2 reduced [2Fe-2S]-[ferredoxin] + 2 S-adenosyl-L-methionine = 2-methyladenosine(2503) in 23S rRNA + 5'-deoxyadenosine + L-methionine + 2 oxidized [2Fe-2S]-[ferredoxin] + S-adenosyl-L-homocysteine. It carries out the reaction adenosine(37) in tRNA + 2 reduced [2Fe-2S]-[ferredoxin] + 2 S-adenosyl-L-methionine = 2-methyladenosine(37) in tRNA + 5'-deoxyadenosine + L-methionine + 2 oxidized [2Fe-2S]-[ferredoxin] + S-adenosyl-L-homocysteine. In terms of biological role, specifically methylates position 2 of adenine 2503 in 23S rRNA and position 2 of adenine 37 in tRNAs. m2A2503 modification seems to play a crucial role in the proofreading step occurring at the peptidyl transferase center and thus would serve to optimize ribosomal fidelity. The protein is Dual-specificity RNA methyltransferase RlmN of Shewanella putrefaciens (strain CN-32 / ATCC BAA-453).